We begin with the raw amino-acid sequence, 156 residues long: Nucleoredoxin-like protein 2 (156 aa).

The region spanning 9–147 is the Thioredoxin domain; that stretch reads RLVTREGTVV…LACFQNWVEA (139 aa).

It belongs to the nucleoredoxin family. In terms of tissue distribution, both isoforms are expressed in retina, in the photoreceptor layer, and throughout the olfactory sensory neuron layer of the nasal epithelium, in neurons. Also expressed at low levels in brain and testis.

Its function is as follows. May be involved in the maintenance of both the function and the viability of sensory neurons, including photoreceptors and olfactory neurons. In the retina, isoform 1 may be required for rod function and isoform 2 for cone viability and function. In Mus musculus (Mouse), this protein is Nucleoredoxin-like protein 2 (Nxnl2).